The primary structure comprises 416 residues: Homogentisate 1,2-dioxygenase (416 aa).

Residue His275 is the Proton acceptor of the active site. Residues His318 and Glu324 each coordinate Fe cation. 2 residues coordinate homogentisate: Tyr333 and His354. His354 contributes to the Fe cation binding site.

Belongs to the homogentisate dioxygenase family. Hexamer; dimer of trimers. Fe cation is required as a cofactor.

It carries out the reaction homogentisate + O2 = 4-maleylacetoacetate + H(+). The protein operates within amino-acid degradation; L-phenylalanine degradation; acetoacetate and fumarate from L-phenylalanine: step 4/6. In terms of biological role, involved in the catabolism of homogentisate (2,5-dihydroxyphenylacetate or 2,5-OH-PhAc), a central intermediate in the degradation of phenylalanine and tyrosine. Catalyzes the oxidative ring cleavage of the aromatic ring of homogentisate to yield maleylacetoacetate. The chain is Homogentisate 1,2-dioxygenase from Legionella pneumophila subsp. pneumophila (strain Philadelphia 1 / ATCC 33152 / DSM 7513).